Reading from the N-terminus, the 303-residue chain is Fe-S cluster assembly protein DRE2 (303 aa).

Residues 1–125 (MTHSRTALVL…WQKRAVTASA (125 aa)) form an N-terminal SAM-like domain region. Residues 126-188 (PVKLAPRQPV…GDAPIAENDL (63 aa)) form a linker region. [2Fe-2S] cluster is bound by residues Cys202, Cys213, Cys216, and Cys218. The interval 202–218 (CGRTQTRRRKACKDCTC) is fe-S binding site A. 4 residues coordinate [4Fe-4S] cluster: Cys266, Cys269, Cys277, and Cys280. 2 short sequence motifs (cx2C motif) span residues 266–269 (CGSC) and 277–280 (CSGC). Residues 266 to 280 (CGSCSLGDAFRCSGC) form a fe-S binding site B region.

It belongs to the anamorsin family. As to quaternary structure, monomer. Interacts with TAH18. Interacts with MIA40. The cofactor is [2Fe-2S] cluster. [4Fe-4S] cluster serves as cofactor.

It localises to the cytoplasm. It is found in the mitochondrion intermembrane space. Its function is as follows. Component of the cytosolic iron-sulfur (Fe-S) protein assembly (CIA) machinery required for the maturation of extramitochondrial Fe-S proteins. Part of an electron transfer chain functioning in an early step of cytosolic Fe-S biogenesis, facilitating the de novo assembly of a [4Fe-4S] cluster on the scaffold complex CFD1-NBP35. Electrons are transferred to DRE2 from NADPH via the FAD- and FMN-containing protein TAH18. TAH18-DRE2 are also required for the assembly of the diferric tyrosyl radical cofactor of ribonucleotide reductase (RNR), probably by providing electrons for reduction during radical cofactor maturation in the catalytic small subunit RNR2. This is Fe-S cluster assembly protein DRE2 from Eremothecium gossypii (strain ATCC 10895 / CBS 109.51 / FGSC 9923 / NRRL Y-1056) (Yeast).